The sequence spans 284 residues: Shikimate dehydrogenase (NADP(+)) (284 aa).

Shikimate-binding positions include 20–22 (SIS) and serine 67. The Proton acceptor role is filled by lysine 71. Aspartate 83 is an NADP(+) binding site. 2 residues coordinate shikimate: asparagine 92 and aspartate 107. NADP(+)-binding positions include 129-133 (GAGGA) and isoleucine 227. A shikimate-binding site is contributed by tyrosine 229. Glycine 250 contributes to the NADP(+) binding site.

The protein belongs to the shikimate dehydrogenase family. As to quaternary structure, homodimer.

The enzyme catalyses shikimate + NADP(+) = 3-dehydroshikimate + NADPH + H(+). It participates in metabolic intermediate biosynthesis; chorismate biosynthesis; chorismate from D-erythrose 4-phosphate and phosphoenolpyruvate: step 4/7. Functionally, involved in the biosynthesis of the chorismate, which leads to the biosynthesis of aromatic amino acids. Catalyzes the reversible NADPH linked reduction of 3-dehydroshikimate (DHSA) to yield shikimate (SA). In Streptococcus pneumoniae (strain P1031), this protein is Shikimate dehydrogenase (NADP(+)).